Consider the following 157-residue polypeptide: Cell cycle control protein 50C (157 aa).

Residues 1–34 (MEERAQHCLSRLLDNSALKQQELPIHRLYFTARR) are Cytoplasmic-facing. The chain crosses the membrane as a helical span at residues 35–55 (VLFVFFATGIFCLCMGIILIL). The Extracellular segment spans residues 56 to 157 (SARSTQEIEI…LFLNQVDFSV (102 aa)). An N-linked (GlcNAc...) asparagine glycan is attached at N66.

It belongs to the CDC50/LEM3 family.

Its subcellular location is the membrane. In Pan troglodytes (Chimpanzee), this protein is Cell cycle control protein 50C (TMEM30C).